A 95-amino-acid polypeptide reads, in one-letter code: UPF0358 protein BT9727_3692 (95 aa).

Belongs to the UPF0358 family.

The protein is UPF0358 protein BT9727_3692 of Bacillus thuringiensis subsp. konkukian (strain 97-27).